Here is a 325-residue protein sequence, read N- to C-terminus: Adenine deaminase (325 aa).

Zn(2+) contacts are provided by H8, H10, and H186. Residue E189 is the Proton donor of the active site. D267 serves as a coordination point for Zn(2+). Substrate is bound at residue D268.

Belongs to the metallo-dependent hydrolases superfamily. Adenosine and AMP deaminases family. Adenine deaminase type 2 subfamily. It depends on Zn(2+) as a cofactor.

The enzyme catalyses adenine + H2O + H(+) = hypoxanthine + NH4(+). In terms of biological role, catalyzes the hydrolytic deamination of adenine to hypoxanthine. Plays an important role in the purine salvage pathway and in nitrogen catabolism. The polypeptide is Adenine deaminase (Chelativorans sp. (strain BNC1)).